Here is an 895-residue protein sequence, read N- to C-terminus: Zyg eleven-related protein 1 (895 aa).

2 disordered regions span residues 58–78 (HGPA…PDQG) and 195–221 (RGQM…SDHQ). Residues 205-220 (SPLSPSSQPSSIQSDH) show a composition bias toward low complexity.

Interacts with elc-1. Part of an E3 ubiquitin ligase complex including zer-11, cul-2 and elc-1.

Its function is as follows. Acts as a target recruitment subunit in the E3 ubiquitin ligase complex zer-1-cul-2-elc-1. The chain is Zyg eleven-related protein 1 (zer-1) from Caenorhabditis elegans.